A 490-amino-acid chain; its full sequence is 3-octaprenyl-4-hydroxybenzoate carboxy-lyase (490 aa).

Mn(2+) is bound at residue N172. Prenylated FMN contacts are provided by residues 175–177, 189–191, and 194–195; these read IYR, RWL, and RG. Residue E238 coordinates Mn(2+). D287 functions as the Proton donor in the catalytic mechanism.

This sequence belongs to the UbiD family. In terms of assembly, homohexamer. It depends on prenylated FMN as a cofactor. Requires Mn(2+) as cofactor.

The protein resides in the cell membrane. The catalysed reaction is a 4-hydroxy-3-(all-trans-polyprenyl)benzoate + H(+) = a 2-(all-trans-polyprenyl)phenol + CO2. The protein operates within cofactor biosynthesis; ubiquinone biosynthesis. Its function is as follows. Catalyzes the decarboxylation of 3-octaprenyl-4-hydroxy benzoate to 2-octaprenylphenol, an intermediate step in ubiquinone biosynthesis. The protein is 3-octaprenyl-4-hydroxybenzoate carboxy-lyase of Idiomarina loihiensis (strain ATCC BAA-735 / DSM 15497 / L2-TR).